Reading from the N-terminus, the 104-residue chain is Increased recombination centers protein 13 (104 aa).

A helical membrane pass occupies residues 63–83 (LVHLFSYVFFLFLLKICVDVL).

Its subcellular location is the membrane. May be involved in a pathway contributing to genomic integrity. This Saccharomyces cerevisiae (strain ATCC 204508 / S288c) (Baker's yeast) protein is Increased recombination centers protein 13 (IRC13).